The sequence spans 279 residues: Vitamin B12-binding protein (279 aa).

The N-terminal stretch at 1 to 20 (MTFRFLCWLTGLLLCTAAYA) is a signal peptide. One can recognise a Fe/B12 periplasmic-binding domain in the interval 24–276 (RVISLAPHAT…QLAELKLAPS (253 aa)). A disulfide bond links C189 and C265.

The protein belongs to the BtuF family. As to quaternary structure, the complex is composed of two ATP-binding proteins (BtuD), two transmembrane proteins (BtuC) and a solute-binding protein (BtuF).

Its subcellular location is the periplasm. Part of the ABC transporter complex BtuCDF involved in vitamin B12 import. Binds vitamin B12 and delivers it to the periplasmic surface of BtuC. This Pectobacterium atrosepticum (strain SCRI 1043 / ATCC BAA-672) (Erwinia carotovora subsp. atroseptica) protein is Vitamin B12-binding protein.